The primary structure comprises 352 residues: Fe(3+) ions import ATP-binding protein FbpC (352 aa).

The 235-residue stretch at 5-239 (LHIGHLSKSF…PADLDAVLFI (235 aa)) folds into the ABC transporter domain. ATP is bound at residue 37-44 (GASGCGKT).

The protein belongs to the ABC transporter superfamily. Fe(3+) ion importer (TC 3.A.1.10) family. As to quaternary structure, the complex is composed of two ATP-binding proteins (FbpC), two transmembrane proteins (FbpB) and a solute-binding protein (FbpA).

Its subcellular location is the cell inner membrane. It catalyses the reaction Fe(3+)(out) + ATP + H2O = Fe(3+)(in) + ADP + phosphate + H(+). Its function is as follows. Part of the ABC transporter complex FbpABC involved in Fe(3+) ions import. Responsible for energy coupling to the transport system. This Neisseria gonorrhoeae protein is Fe(3+) ions import ATP-binding protein FbpC.